The sequence spans 834 residues: Ras GTPase-activating protein 3 (834 aa).

2 consecutive C2 domains span residues 1–112 (MAVE…DTWF) and 123–263 (VQGK…EAWY). An N-acetylalanine modification is found at alanine 2. Tyrosine 66 carries the phosphotyrosine modification. Position 77 is a phosphoserine (serine 77). The residue at position 110 (threonine 110) is a Phosphothreonine. In terms of domain architecture, Ras-GAP spans 346-561 (GRVVPFISAI…DAVKNFLDLI (216 aa)). The PH domain occupies 576–677 (ILLKEGFMIK…WIDILTKVSQ (102 aa)). A Btk-type zinc finger spans residues 679-715 (NQKRLAVYHPSAYLNGHWLCCRASSDTAAGCSPCTGG). The Zn(2+) site is built by histidine 687, cysteine 698, cysteine 699, and cysteine 709. Residues 806-834 (KYGSQEHPIGDKSFQSYIRQQSETPAHSM) form a disordered region. Residues serine 809 and serine 833 each carry the phosphoserine modification. Residues 818–834 (SFQSYIRQQSETPAHSM) show a composition bias toward polar residues.

Functionally, inhibitory regulator of the Ras-cyclic AMP pathway. May bind inositol tetrakisphosphate (IP4). The chain is Ras GTPase-activating protein 3 (RASA3) from Bos taurus (Bovine).